A 744-amino-acid chain; its full sequence is TonB-dependent heme receptor A (744 aa).

The N-terminal stretch at 1-24 (MNILINKRIFLLVTLVGIQLNVTA) is a signal peptide. The TBDR plug domain occupies 45–157 (DDSNKLPGRS…FAGTVKFETK (113 aa)). Residues 168–744 (KIGGFLKYGN…NIKFSLSQKF (577 aa)) form the TBDR beta-barrel domain.

The protein belongs to the TonB-dependent receptor family.

Its subcellular location is the cell outer membrane. Functionally, heme receptor. This chain is TonB-dependent heme receptor A (tdhA), found in Haemophilus influenzae (strain ATCC 51907 / DSM 11121 / KW20 / Rd).